Here is a 1269-residue protein sequence, read N- to C-terminus: MTVKLGDGGSGEDGLKKLGKRAADEESLEGEGAGGADAAEESSGTKRDEKTPRAGADGPPAPPGAPQAPSPPQGSPQDQHHFLRSSVRPQSKRPRKDPPSAVGSGNAGGSGPRGKGAEGGGSSSGNVSGVAPAAPAGGSRSSSRNLGSSGGEKEEGKKVRRQWESWSTEDKNTFFEGLYEHGKDFEAIQNNIALKYKKKGKPASMVKNKEQVRHFYYRTWHKITKYIDFDHVFSRGLKKSSQELYGLICYGELRKKIGGCMDDKNATKLNELIQVGATTVRYKGRNLRIKAPMCRALKKLCDPDGLSDEEDQKPVRLPLKVPIELQPRNNHAWARVQSLAQNPRLRMIVELHRKVSSLIEFLKQKWALHEVRVRKTLEERQLQDSCSAPMQEKVTLHLFPGENCTLTPLPGVARVVHSKAFCTVHWQEGGRCKQSAKDAHVLPPAQILGIQSGQGTARGQVKCPRSGAEGKGVGRPPPAADALQSSGESSPESAPGEGAALSLSSPDAPDRPPPRHQDTGPCLEKTPAEGRDSPTREPGALPCACGQLPDLEDELSLLDPLPRYLKSCQDLIVPEQCRCADTRPGSEQPPLGGAASPEVLAPVSKEAADLAPTGPSPRPGPGLLLDVCTKDLADAPAEELQEKGSPAGPPPSQGQPAARPPKEVPASRLAQQLREEGWNLQTSESLTLAEVYLMMGKPSKLQLEYDWLGPGRQDPRPGSLPTALHKQRLLSCLLKLISTEVNPKLALEANTISTASVRPAQEEQSMTPPGKVVTVSSRSPRCPRNQASLRSSKTFPPSSAPCSSGLRNPPRPLLVPGPSSTGSNDSDGGLFAVPTTLPPNSRHGKLFSPSKEAELTFRQHLNSISMQSDFFLPKPRKLRNRHLRKPLVVQRTLLPRPSENQSHNVCSFSILSNSSVTGRGSFRPIQSSLTKAALSRPIVPKVLPPQATSHLASAIDLAATSAGILSGNPLPALDTEGLSGISPLSSDEVTGAISGQDSTGTHQDGDTLPTVGGSDPFVSIPSRPEQEPVADSFQGSSVLSLSELPKAPLQNGLSIPLSSSESSSTRLSPPDVSALLDISLPGPPEDALSQGEPATHISDSIIEIAISSGQYGEGVPLSPAKLNGSDSSKSLPSPSSSPQPHWIASPTHDPQWYPSDSTDSSLSSLFASFISPEKSRKMLPTPIGTNSGTSLLGPSLLDGNSRDSFVSRSLADVAEVVDSQLVCMMNENSIDYISRFNDLAQELSIAEPGRREALFDGGGGGPAVSDLSQ.

Residues 1-12 (MTVKLGDGGSGE) show a composition bias toward gly residues. The interval 1-165 (MTVKLGDGGS…GKKVRRQWES (165 aa)) is disordered. 2 stretches are compositionally biased toward basic and acidic residues: residues 13-24 (DGLKKLGKRAAD) and 43-52 (SGTKRDEKTP). The segment covering 59-74 (PPAPPGAPQAPSPPQG) has biased composition (pro residues). The segment covering 105–123 (GNAGGSGPRGKGAEGGGSS) has biased composition (gly residues). Positions 124–147 (SGNVSGVAPAAPAGGSRSSSRNLG) are enriched in low complexity. Residues 151–165 (GEKEEGKKVRRQWES) show a composition bias toward basic and acidic residues. The SANT domain maps to 161-224 (RQWESWSTED…FYYRTWHKIT (64 aa)). At Ser307 the chain carries Phosphoserine. Disordered stretches follow at residues 450–541 (IQSG…PGAL), 581–666 (DTRP…EVPA), 757–827 (VRPA…NDSD), 976–1034 (EGLS…DSFQ), 1055–1092 (IPLSSSESSSTRLSPPDVSALLDISLPGPPEDALSQGE), and 1115–1157 (VPLS…PSDS). Low complexity predominate over residues 485–507 (SSGESSPESAPGEGAALSLSSPD). Composition is skewed to basic and acidic residues over residues 508–518 (APDRPPPRHQD) and 526–535 (TPAEGRDSPT). Composition is skewed to polar residues over residues 757–767 (VRPAQEEQSMT), 774–806 (TVSSRSPRCPRNQASLRSSKTFPPSSAPCSSGL), and 982–1002 (SPLSSDEVTGAISGQDSTGTH). Low complexity-rich tracts occupy residues 1055 to 1070 (IPLSSSESSSTRLSPP) and 1125 to 1140 (SDSSKSLPSPSSSPQP). The residue at position 1268 (Ser1268) is a Phosphoserine.

Belongs to the cramped family.

The protein resides in the nucleus. In Homo sapiens (Human), this protein is Protein cramped-like.